The following is a 392-amino-acid chain: 8-amino-7-oxononanoate synthase (392 aa).

A substrate-binding site is contributed by Arg19. 106–107 (GY) is a pyridoxal 5'-phosphate binding site. Position 131 (His131) interacts with substrate. The pyridoxal 5'-phosphate site is built by Ser176, His204, and Thr233. Residue Lys236 is modified to N6-(pyridoxal phosphate)lysine. Thr350 lines the substrate pocket.

It belongs to the class-II pyridoxal-phosphate-dependent aminotransferase family. BioF subfamily. In terms of assembly, homodimer. It depends on pyridoxal 5'-phosphate as a cofactor.

The catalysed reaction is 6-carboxyhexanoyl-[ACP] + L-alanine + H(+) = (8S)-8-amino-7-oxononanoate + holo-[ACP] + CO2. Its pathway is cofactor biosynthesis; biotin biosynthesis. In terms of biological role, catalyzes the decarboxylative condensation of pimeloyl-[acyl-carrier protein] and L-alanine to produce 8-amino-7-oxononanoate (AON), [acyl-carrier protein], and carbon dioxide. This Stutzerimonas stutzeri (strain A1501) (Pseudomonas stutzeri) protein is 8-amino-7-oxononanoate synthase.